The following is a 675-amino-acid chain: Methionine--tRNA ligase (675 aa).

Residues 15–25 (PYANGSIHLGH) carry the 'HIGH' region motif. The Zn(2+) site is built by cysteine 146, cysteine 149, cysteine 159, and cysteine 162. The 'KMSKS' region motif lies at 332 to 336 (KMSKS). Lysine 335 contacts ATP. The tRNA-binding domain maps to 574–675 (DFAKLDLRIA…AGAKPGMRVK (102 aa)).

It belongs to the class-I aminoacyl-tRNA synthetase family. MetG type 1 subfamily. In terms of assembly, homodimer. Zn(2+) serves as cofactor.

Its subcellular location is the cytoplasm. It catalyses the reaction tRNA(Met) + L-methionine + ATP = L-methionyl-tRNA(Met) + AMP + diphosphate. Is required not only for elongation of protein synthesis but also for the initiation of all mRNA translation through initiator tRNA(fMet) aminoacylation. In Tolumonas auensis (strain DSM 9187 / NBRC 110442 / TA 4), this protein is Methionine--tRNA ligase.